The sequence spans 533 residues: Peptide chain release factor 3 (533 aa).

A tr-type G domain is found at 10–278 (EKRRTFAIIS…TFVEIAPPPQ (269 aa)). GTP contacts are provided by residues 19–26 (SHPDAGKT), 87–91 (DTPGH), and 141–144 (NKMD).

The protein belongs to the TRAFAC class translation factor GTPase superfamily. Classic translation factor GTPase family. PrfC subfamily.

It is found in the cytoplasm. Increases the formation of ribosomal termination complexes and stimulates activities of RF-1 and RF-2. It binds guanine nucleotides and has strong preference for UGA stop codons. It may interact directly with the ribosome. The stimulation of RF-1 and RF-2 is significantly reduced by GTP and GDP, but not by GMP. This is Peptide chain release factor 3 from Salinibacter ruber (strain DSM 13855 / M31).